Consider the following 1373-residue polypeptide: DNA-directed RNA polymerase subunit beta (1373 aa).

The protein belongs to the RNA polymerase beta chain family. As to quaternary structure, the RNAP catalytic core consists of 2 alpha, 1 beta, 1 beta' and 1 omega subunit. When a sigma factor is associated with the core the holoenzyme is formed, which can initiate transcription.

It carries out the reaction RNA(n) + a ribonucleoside 5'-triphosphate = RNA(n+1) + diphosphate. DNA-dependent RNA polymerase catalyzes the transcription of DNA into RNA using the four ribonucleoside triphosphates as substrates. The chain is DNA-directed RNA polymerase subunit beta from Rickettsia massiliae (strain Mtu5).